Consider the following 640-residue polypeptide: Serine/threonine-protein kinase ELM1 (640 aa).

Residues 27–47 (ELDSPPITPTSQTSSFGSSFS) are disordered. Positions 35–47 (PTSQTSSFGSSFS) are enriched in low complexity. Residues 88 to 420 (YTLGVSAGSG…PIDSRNHSQI (333 aa)) form the Protein kinase domain. Residues 94-102 (AGSGQFGYV) and K117 each bind ATP. S152 bears the Phosphoserine mark. The active-site Proton acceptor is D259. S516 and S519 each carry phosphoserine. The segment covering 520–529 (LPNLTVNNDK) has biased composition (polar residues). Disordered regions lie at residues 520–547 (LPNLTVNNDKQNSDMKTDRSESSSHSSL) and 562–587 (SPKENGNRTHINCSQDKPSSPLMDRT). Residues 530–541 (QNSDMKTDRSES) are compositionally biased toward basic and acidic residues. Residues 569 to 579 (RTHINCSQDKP) are compositionally biased toward polar residues.

It belongs to the protein kinase superfamily. Ser/Thr protein kinase family. Mg(2+) serves as cofactor.

The enzyme catalyses L-seryl-[protein] + ATP = O-phospho-L-seryl-[protein] + ADP + H(+). It carries out the reaction L-threonyl-[protein] + ATP = O-phospho-L-threonyl-[protein] + ADP + H(+). Important role in G1 events required for bud emergence and septin organization. Coordinates cell growth and cell division at G2/M, essential for efficient cytokinesis and for regulation of SWE1. This Saccharomyces cerevisiae (strain ATCC 204508 / S288c) (Baker's yeast) protein is Serine/threonine-protein kinase ELM1 (ELM1).